The sequence spans 66 residues: Large ribosomal subunit protein uL29 (66 aa).

It belongs to the universal ribosomal protein uL29 family.

This Ruegeria pomeroyi (strain ATCC 700808 / DSM 15171 / DSS-3) (Silicibacter pomeroyi) protein is Large ribosomal subunit protein uL29.